A 283-amino-acid polypeptide reads, in one-letter code: Putative pyruvate, phosphate dikinase regulatory protein (283 aa).

156 to 163 (GLSRAGKT) contributes to the ADP binding site.

The protein belongs to the pyruvate, phosphate/water dikinase regulatory protein family. PDRP subfamily.

It catalyses the reaction N(tele)-phospho-L-histidyl/L-threonyl-[pyruvate, phosphate dikinase] + ADP = N(tele)-phospho-L-histidyl/O-phospho-L-threonyl-[pyruvate, phosphate dikinase] + AMP + H(+). It carries out the reaction N(tele)-phospho-L-histidyl/O-phospho-L-threonyl-[pyruvate, phosphate dikinase] + phosphate + H(+) = N(tele)-phospho-L-histidyl/L-threonyl-[pyruvate, phosphate dikinase] + diphosphate. Functionally, bifunctional serine/threonine kinase and phosphorylase involved in the regulation of the pyruvate, phosphate dikinase (PPDK) by catalyzing its phosphorylation/dephosphorylation. This chain is Putative pyruvate, phosphate dikinase regulatory protein, found in Desulfotalea psychrophila (strain LSv54 / DSM 12343).